A 310-amino-acid chain; its full sequence is ADP-L-glycero-D-manno-heptose-6-epimerase (310 aa).

NADP(+) contacts are provided by residues phenylalanine 10 to isoleucine 11, aspartate 31 to asparagine 32, lysine 38, lysine 53, glutamate 75 to serine 79, and asparagine 92. Catalysis depends on tyrosine 140, which acts as the Proton acceptor. Lysine 144 is a binding site for NADP(+). Asparagine 169 is a binding site for substrate. The NADP(+) site is built by valine 170 and lysine 178. Lysine 178 functions as the Proton acceptor in the catalytic mechanism. Residues serine 180, histidine 187, phenylalanine 201–serine 204, and arginine 209 contribute to the substrate site. Residue lysine 267 is modified to N6-acetyllysine. Tyrosine 272 contributes to the substrate binding site.

It belongs to the NAD(P)-dependent epimerase/dehydratase family. HldD subfamily. Homopentamer. It depends on NADP(+) as a cofactor. NAD(+) serves as cofactor.

It carries out the reaction ADP-D-glycero-beta-D-manno-heptose = ADP-L-glycero-beta-D-manno-heptose. Its pathway is nucleotide-sugar biosynthesis; ADP-L-glycero-beta-D-manno-heptose biosynthesis; ADP-L-glycero-beta-D-manno-heptose from D-glycero-beta-D-manno-heptose 7-phosphate: step 4/4. It participates in bacterial outer membrane biogenesis; LPS core biosynthesis. With respect to regulation, completely inhibited by ADP and ADP-glucose, and partially inhibited by ATP and NADH. Its function is as follows. Catalyzes the interconversion between ADP-D-glycero-beta-D-manno-heptose and ADP-L-glycero-beta-D-manno-heptose via an epimerization at carbon 6 of the heptose. This Escherichia coli (strain K12) protein is ADP-L-glycero-D-manno-heptose-6-epimerase (hldD).